The chain runs to 201 residues: MAQPEDPEDFVAPAAYRVRAGTMLLANTDLLEPTFRRSVIYVVEHNDGGTLGVVLNRPSETAVYNVLPQWAKLATKPKTMFIGGPVKRDAALCLATLRVGIDPAGVDGLRHVQGRVVMVDLDADPDSIAPMVEGVRIFAGYSGWTIGQLEGEIERDDWIVLSALPSDVLVEPRVDLWARILRRQPMPLSLLATHPIDLSRN.

This sequence belongs to the UPF0301 (AlgH) family.

The sequence is that of UPF0301 protein Mvan_6057 from Mycolicibacterium vanbaalenii (strain DSM 7251 / JCM 13017 / BCRC 16820 / KCTC 9966 / NRRL B-24157 / PYR-1) (Mycobacterium vanbaalenii).